Consider the following 187-residue polypeptide: Elongation factor P (187 aa).

Belongs to the elongation factor P family.

Its subcellular location is the cytoplasm. Its pathway is protein biosynthesis; polypeptide chain elongation. In terms of biological role, involved in peptide bond synthesis. Stimulates efficient translation and peptide-bond synthesis on native or reconstituted 70S ribosomes in vitro. Probably functions indirectly by altering the affinity of the ribosome for aminoacyl-tRNA, thus increasing their reactivity as acceptors for peptidyl transferase. The polypeptide is Elongation factor P (Helicobacter pylori (strain P12)).